The sequence spans 377 residues: tRNA(Met) cytidine acetate ligase (377 aa).

ATP contacts are provided by residues 7-20, Gly100, Asn153, and Arg178; that span reads ITEY…HLFH.

It belongs to the TmcAL family.

It localises to the cytoplasm. The catalysed reaction is cytidine(34) in elongator tRNA(Met) + acetate + ATP = N(4)-acetylcytidine(34) in elongator tRNA(Met) + AMP + diphosphate. In terms of biological role, catalyzes the formation of N(4)-acetylcytidine (ac(4)C) at the wobble position of elongator tRNA(Met), using acetate and ATP as substrates. First activates an acetate ion to form acetyladenylate (Ac-AMP) and then transfers the acetyl group to tRNA to form ac(4)C34. The polypeptide is tRNA(Met) cytidine acetate ligase (Staphylococcus epidermidis (strain ATCC 35984 / DSM 28319 / BCRC 17069 / CCUG 31568 / BM 3577 / RP62A)).